We begin with the raw amino-acid sequence, 505 residues long: ATP synthase subunit alpha, cyanelle (505 aa).

170 to 177 (GDRQTGKT) is a binding site for ATP.

This sequence belongs to the ATPase alpha/beta chains family. In terms of assembly, F-type ATPases have 2 components, CF(1) - the catalytic core - and CF(0) - the membrane proton channel. CF(1) has five subunits: alpha(3), beta(3), gamma(1), delta(1), epsilon(1). CF(0) has four main subunits: a, b, b' and c.

The protein localises to the plastid. The protein resides in the cyanelle thylakoid membrane. The catalysed reaction is ATP + H2O + 4 H(+)(in) = ADP + phosphate + 5 H(+)(out). In terms of biological role, produces ATP from ADP in the presence of a proton gradient across the membrane. The alpha chain is a regulatory subunit. This is ATP synthase subunit alpha, cyanelle from Cyanophora paradoxa.